The primary structure comprises 510 residues: NAD(P)H-quinone oxidoreductase subunit 2 A, chloroplastic (510 aa).

The next 13 membrane-spanning stretches (helical) occupy residues 24 to 44 (LLLF…GLIL), 57 to 77 (IPWL…ALLF), 99 to 119 (IFQF…VEYI), 124 to 144 (MALT…MFLC), 149 to 169 (LITI…LSGY), 183 to 203 (YLLM…WLYG), 227 to 247 (PGIS…LSPA), 295 to 315 (WHLL…LIAI), 323 to 343 (MLAY…IVGD), 354 to 374 (YMLF…LFGL), 395 to 415 (ALSL…AGFF), 418 to 438 (IYLF…IGLL), and 484 to 504 (MIVC…IITI).

This sequence belongs to the complex I subunit 2 family. As to quaternary structure, NDH is composed of at least 16 different subunits, 5 of which are encoded in the nucleus.

The protein localises to the plastid. It localises to the chloroplast thylakoid membrane. It carries out the reaction a plastoquinone + NADH + (n+1) H(+)(in) = a plastoquinol + NAD(+) + n H(+)(out). The catalysed reaction is a plastoquinone + NADPH + (n+1) H(+)(in) = a plastoquinol + NADP(+) + n H(+)(out). NDH shuttles electrons from NAD(P)H:plastoquinone, via FMN and iron-sulfur (Fe-S) centers, to quinones in the photosynthetic chain and possibly in a chloroplast respiratory chain. The immediate electron acceptor for the enzyme in this species is believed to be plastoquinone. Couples the redox reaction to proton translocation, and thus conserves the redox energy in a proton gradient. This Spinacia oleracea (Spinach) protein is NAD(P)H-quinone oxidoreductase subunit 2 A, chloroplastic.